Here is a 247-residue protein sequence, read N- to C-terminus: Chymase (247 aa).

An N-terminal signal peptide occupies residues 1-19 (MLLLPLPLLLFFLCSRAEA). Residues 20–21 (GE) constitute a propeptide, activation peptide. The 224-residue stretch at 22–245 (IIGGTECKPH…YRPWINKILQ (224 aa)) folds into the Peptidase S1 domain. The cysteines at positions 51 and 67 are disulfide-linked. H66 acts as the Charge relay system in catalysis. N80 and N103 each carry an N-linked (GlcNAc...) asparagine glycan. The active-site Charge relay system is D110. Cystine bridges form between C144-C209 and C175-C188. S203 (charge relay system) is an active-site residue.

The protein belongs to the peptidase S1 family. Granzyme subfamily.

The protein localises to the secreted. It localises to the cytoplasmic granule. The enzyme catalyses Preferential cleavage: Phe-|-Xaa &gt; Tyr-|-Xaa &gt; Trp-|-Xaa &gt; Leu-|-Xaa.. Functionally, major secreted protease of mast cells with suspected roles in vasoactive peptide generation, extracellular matrix degradation, and regulation of gland secretion. The chain is Chymase (CMA1) from Macaca fascicularis (Crab-eating macaque).